Here is a 471-residue protein sequence, read N- to C-terminus: Ribulose bisphosphate carboxylase large chain (471 aa).

Substrate-binding residues include Asn115 and Thr165. The active-site Proton acceptor is Lys167. Position 169 (Lys169) interacts with substrate. Mg(2+)-binding residues include Lys193, Asp195, and Glu196. Residue Lys193 is modified to N6-carboxylysine. Catalysis depends on His286, which acts as the Proton acceptor. The substrate site is built by Arg287, His319, and Ser371.

It belongs to the RuBisCO large chain family. Type I subfamily. In terms of assembly, heterohexadecamer of 8 large chains and 8 small chains. It depends on Mg(2+) as a cofactor.

The protein localises to the carboxysome. It carries out the reaction 2 (2R)-3-phosphoglycerate + 2 H(+) = D-ribulose 1,5-bisphosphate + CO2 + H2O. The catalysed reaction is D-ribulose 1,5-bisphosphate + O2 = 2-phosphoglycolate + (2R)-3-phosphoglycerate + 2 H(+). Functionally, ruBisCO catalyzes two reactions: the carboxylation of D-ribulose 1,5-bisphosphate, the primary event in carbon dioxide fixation, as well as the oxidative fragmentation of the pentose substrate in the photorespiration process. Both reactions occur simultaneously and in competition at the same active site. The sequence is that of Ribulose bisphosphate carboxylase large chain from Synechococcus sp. (strain RCC307).